Consider the following 185-residue polypeptide: NADH-quinone oxidoreductase subunit B (185 aa).

Cys64, Cys65, Cys129, and Cys159 together coordinate [4Fe-4S] cluster.

The protein belongs to the complex I 20 kDa subunit family. As to quaternary structure, NDH-1 is composed of 14 different subunits. Subunits NuoB, C, D, E, F, and G constitute the peripheral sector of the complex. [4Fe-4S] cluster serves as cofactor.

The protein resides in the cell inner membrane. The catalysed reaction is a quinone + NADH + 5 H(+)(in) = a quinol + NAD(+) + 4 H(+)(out). Functionally, NDH-1 shuttles electrons from NADH, via FMN and iron-sulfur (Fe-S) centers, to quinones in the respiratory chain. Couples the redox reaction to proton translocation (for every two electrons transferred, four hydrogen ions are translocated across the cytoplasmic membrane), and thus conserves the redox energy in a proton gradient. The chain is NADH-quinone oxidoreductase subunit B from Rhodospirillum rubrum (strain ATCC 11170 / ATH 1.1.1 / DSM 467 / LMG 4362 / NCIMB 8255 / S1).